Here is a 541-residue protein sequence, read N- to C-terminus: Sialate O-acetylesterase (541 aa).

The signal sequence occupies residues 1 to 23 (MVSPGPVFGIVLLIIARVSRSAG). Residues asparagine 107, asparagine 138, asparagine 188, asparagine 293, asparagine 356, asparagine 427, asparagine 448, and asparagine 462 are each glycosylated (N-linked (GlcNAc...) asparagine).

As to quaternary structure, disulfide-linked heterodimer of a small subunit and a large subunit. In terms of processing, the two subunits are derived from a single precursor by proteolytic cleavage. The lysosomal isoform is glycosylated. Highly expressed in liver, testis, and kidney, whereas skeletal muscle, adipose tissue, and heart have lower levels. As to expression, highest expression in brain and ovary and lower levels in liver and thymus.

It is found in the lysosome. The protein resides in the cytoplasm. It carries out the reaction N-acetyl-9-O-acetylneuraminate + H2O = N-acetylneuraminate + acetate + H(+). The catalysed reaction is an Ac-O-9-sialoglycoconjugate + H2O = a sialoglycoconjugate + acetate + H(+). Inhibited by diisopropyl fluorophosphate and diethyl-P-nitrophenyl phosphate. In terms of biological role, catalyzes the removal of O-acetyl ester groups from position 9 of the free diacetylated sialate N-acetyl-9-O-acetylneuraminate (Neu5,9Ac2) in the cytosol and of the diacetylated sialate residues of sialylglycoconjugates in the lysosomes. Together with the sialate-O-acetyltransferase they regulate the balance of acetylated sialoglycoconjugates, key players in various processes such as cell-cell interactions, host-pathogen recognition, and tumor antigenicity. The protein is Sialate O-acetylesterase (Siae) of Mus musculus (Mouse).